Reading from the N-terminus, the 576-residue chain is 5'-nucleotidase (576 aa).

The first 28 residues, 1 to 28 (MRPAAAKVPKWLLLALSALLPQWPAASA), serve as a signal peptide directing secretion. Residues D38 and H40 each contribute to the Zn(2+) site. A disulfide bridge links C53 with C59. An N-linked (GlcNAc...) asparagine glycan is attached at N55. Zn(2+) is bound by residues D87, N119, H222, and H245. Residues N313 and N335 are each glycosylated (N-linked (GlcNAc...) asparagine). Cystine bridges form between C355-C360 and C367-C389. An AMP-binding site is contributed by R356. R356 contributes to the IMP binding site. AMP is bound by residues N392 and R397. The IMP site is built by N392 and R397. Residue N405 is glycosylated (N-linked (GlcNAc...) asparagine). F419 provides a ligand contact to AMP. An IMP-binding site is contributed by F419. C478 and C481 are disulfide-bonded. AMP contacts are provided by Y502 and D508. IMP is bound by residues Y502 and D508. Residue S551 is the site of GPI-anchor amidated serine attachment. A propeptide spans 552-576 (AASHYQGSFPLVILSFWAMILILYQ) (removed in mature form).

The protein belongs to the 5'-nucleotidase family. As to quaternary structure, homodimer. Requires Zn(2+) as cofactor. In terms of tissue distribution, expressed at high levels in the placenta, kidney, lung and stomach and at lower levels in the thymus, spleen, skeletal muscle and esophagus.

It is found in the cell membrane. The catalysed reaction is a ribonucleoside 5'-phosphate + H2O = a ribonucleoside + phosphate. The enzyme catalyses a 2'-deoxyribonucleoside 5'-phosphate + H2O = a 2'-deoxyribonucleoside + phosphate. It catalyses the reaction dTMP + H2O = thymidine + phosphate. It carries out the reaction CMP + H2O = cytidine + phosphate. The catalysed reaction is IMP + H2O = inosine + phosphate. The enzyme catalyses AMP + H2O = adenosine + phosphate. It catalyses the reaction GMP + H2O = guanosine + phosphate. It carries out the reaction UMP + H2O = uridine + phosphate. The catalysed reaction is dAMP + H2O = 2'-deoxyadenosine + phosphate. The enzyme catalyses dCMP + H2O = 2'-deoxycytidine + phosphate. Functionally, catalyzes the hydrolysis of nucleotide monophosphates, releasing inorganic phosphate and the corresponding nucleoside. Hydrolyzes IMP. Shows a preference for ribonucleotide monophosphates over their equivalent deoxyribose forms. Although AMP is the preferred substrate can also hydrolyze UMP, GMP, CMP, dAMP, dCMP, dTMP, NAD and NMN. The protein is 5'-nucleotidase (Nt5e) of Mus musculus (Mouse).